We begin with the raw amino-acid sequence, 646 residues long: ATP-dependent zinc metalloprotease FtsH (646 aa).

At 1 to 4 (MTRS) the chain is on the cytoplasmic side. The helical transmembrane segment at 5-25 (LLWQMVIVLGAILMVNYVLTT) threads the bilayer. At 26 to 120 (LTPQTQEPVV…VRPESKPSPW (95 aa)) the chain is on the periplasmic side. Residues 121-141 (ATAMIYMLPWLLIVGVWWFVI) traverse the membrane as a helical segment. The Cytoplasmic portion of the chain corresponds to 142–646 (KGMRTRQGPG…GELAGGAVEG (505 aa)). 216 to 223 (GPPGTGKT) lines the ATP pocket. H437 provides a ligand contact to Zn(2+). E438 is an active-site residue. Positions 441 and 513 each coordinate Zn(2+).

This sequence in the central section; belongs to the AAA ATPase family. The protein in the C-terminal section; belongs to the peptidase M41 family. In terms of assembly, homohexamer. Requires Zn(2+) as cofactor.

The protein resides in the cell inner membrane. Its function is as follows. Acts as a processive, ATP-dependent zinc metallopeptidase for both cytoplasmic and membrane proteins. Plays a role in the quality control of integral membrane proteins. This is ATP-dependent zinc metalloprotease FtsH from Syntrophotalea carbinolica (strain DSM 2380 / NBRC 103641 / GraBd1) (Pelobacter carbinolicus).